We begin with the raw amino-acid sequence, 383 residues long: uncharacterized protein (383 aa).

To V.anguillarum virulence protein VirA.

In terms of biological role, could have an enzymatic function. This is an uncharacterized protein from Sinorhizobium fredii (strain NBRC 101917 / NGR234).